Here is a 428-residue protein sequence, read N- to C-terminus: Glutamate-1-semialdehyde 2,1-aminomutase (428 aa).

N6-(pyridoxal phosphate)lysine is present on K265.

It belongs to the class-III pyridoxal-phosphate-dependent aminotransferase family. HemL subfamily. Homodimer. It depends on pyridoxal 5'-phosphate as a cofactor.

The protein localises to the cytoplasm. It carries out the reaction (S)-4-amino-5-oxopentanoate = 5-aminolevulinate. Its pathway is porphyrin-containing compound metabolism; protoporphyrin-IX biosynthesis; 5-aminolevulinate from L-glutamyl-tRNA(Glu): step 2/2. The sequence is that of Glutamate-1-semialdehyde 2,1-aminomutase from Thioalkalivibrio sulfidiphilus (strain HL-EbGR7).